A 257-amino-acid chain; its full sequence is Homeobox protein goosecoid (257 aa).

The homeobox DNA-binding region spans 160–219; sequence KRRHRTIFTDEQLEALENLFQETKYPDVGTREQLARKVHLREEKVEVWFKNRRAKWRRQK. The tract at residues 213-257 is disordered; the sequence is AKWRRQKRSSSEESENAEKWNKTSSSKASPEKREEEGKSDLDSDS. Over residues 241–257 the composition is skewed to basic and acidic residues; sequence SPEKREEEGKSDLDSDS.

It belongs to the paired homeobox family. Bicoid subfamily.

It localises to the nucleus. In terms of biological role, regulates chordin (CHRD). May play a role in spatial programing within discrete embryonic fields or lineage compartments during organogenesis. In concert with NKX3-2, plays a role in defining the structural components of the middle ear; required for the development of the entire tympanic ring. Probably involved in the regulatory networks that define neural crest cell fate specification and determine mesoderm cell lineages in mammals. The protein is Homeobox protein goosecoid (GSC) of Homo sapiens (Human).